Here is a 276-residue protein sequence, read N- to C-terminus: Putative E3 ubiquitin-protein ligase SINA-like 9 (276 aa).

An RING-type zinc finger spans residues Cys-38–Thr-74. The SBD stretch occupies residues Val-88 to Asp-274. The SIAH-type zinc finger occupies Ser-91–Ser-149. Residues Cys-96, Cys-103, His-115, Cys-119, Cys-126, Cys-131, His-143, and His-148 each coordinate Zn(2+).

Belongs to the SINA (Seven in absentia) family.

It catalyses the reaction S-ubiquitinyl-[E2 ubiquitin-conjugating enzyme]-L-cysteine + [acceptor protein]-L-lysine = [E2 ubiquitin-conjugating enzyme]-L-cysteine + N(6)-ubiquitinyl-[acceptor protein]-L-lysine.. It participates in protein modification; protein ubiquitination. In terms of biological role, E3 ubiquitin-protein ligase that mediates ubiquitination and subsequent proteasomal degradation of target proteins. E3 ubiquitin ligases accept ubiquitin from an E2 ubiquitin-conjugating enzyme in the form of a thioester and then directly transfers the ubiquitin to targeted substrates. It probably triggers the ubiquitin-mediated degradation of different substrates. The polypeptide is Putative E3 ubiquitin-protein ligase SINA-like 9 (Arabidopsis thaliana (Mouse-ear cress)).